Consider the following 112-residue polypeptide: Abdominal ganglion neuropeptides L5-67 (112 aa).

The N-terminal stretch at 1-23 (MKTAVLLVCLAYVMAAILSLCAS) is a signal peptide. Position 33 is a phenylalanine amide (Phe33).

Post-translationally, the prohormone is proteolytically cleaved in 2 steps, yielding first 2 products: luqin and PRMP. In the second step, PRMP is cleaved to yield luqin-B and luqin-C. As to expression, neurons L2-4 and L6, also called giant dorsal LUQ (Left Upper Quadrant) neurons of the abdominal ganglion. Also expressed in smaller neurons in the CNS and in peripheral organs such as the kidney.

The protein resides in the secreted. In Aplysia californica (California sea hare), this protein is Abdominal ganglion neuropeptides L5-67.